The sequence spans 63 residues: MAVPFRRQSKGRKRRRRSHYKLKTPTIVVDPQTGEFTLPHRVTPNSGYYKGQLVLAKKVKKED.

It belongs to the bacterial ribosomal protein bL32 family.

The sequence is that of Large ribosomal subunit protein bL32 from Acholeplasma laidlawii.